A 280-amino-acid polypeptide reads, in one-letter code: Formyltetrahydrofolate deformylase (280 aa).

An ACT domain is found at 8 to 86 (VLRTICPDQK…RELNPAGRRR (79 aa)). Residue Asp-225 is part of the active site.

The protein belongs to the PurU family.

It catalyses the reaction (6R)-10-formyltetrahydrofolate + H2O = (6S)-5,6,7,8-tetrahydrofolate + formate + H(+). It participates in purine metabolism; IMP biosynthesis via de novo pathway; formate from 10-formyl-5,6,7,8-tetrahydrofolate: step 1/1. Catalyzes the hydrolysis of 10-formyltetrahydrofolate (formyl-FH4) to formate and tetrahydrofolate (FH4). The chain is Formyltetrahydrofolate deformylase from Escherichia coli O6:H1 (strain CFT073 / ATCC 700928 / UPEC).